Consider the following 776-residue polypeptide: U3 small nucleolar RNA-associated protein 4 (776 aa).

6 WD repeats span residues 35-40, 132-169, 178-214, 230-266, 271-308, and 417-452; these read RCRFVD, LPLR…VLID, EHDT…RIWS, KVDK…KFWD, TLNQ…FQFS, and VCKL…KVFH.

As to quaternary structure, interacts with snoRNA U3. Interacts with MPP10. Component of the ribosomal small subunit (SSU) processome composed of at least 40 protein subunits and snoRNA U3. In the absence of snoRNA3, forms a complex with other t-UTPs. This complex can associate with pre-18S ribosomal RNAs.

The protein resides in the nucleus. The protein localises to the nucleolus. Its function is as follows. Involved in nucleolar processing of pre-18S ribosomal RNA. Required for optimal pre-ribosomal RNA transcription by RNA polymerase I together with a subset of U3 proteins required for transcription (t-UTPs). The chain is U3 small nucleolar RNA-associated protein 4 (UTP4) from Saccharomyces cerevisiae (strain ATCC 204508 / S288c) (Baker's yeast).